The sequence spans 105 residues: uncharacterized protein (105 aa).

One can recognise a Hcy-binding domain in the interval 1–101 (MMDLGDKINP…KDIQEISAAV (101 aa)).

This is an uncharacterized protein from Saccharomyces cerevisiae (strain ATCC 204508 / S288c) (Baker's yeast).